A 299-amino-acid polypeptide reads, in one-letter code: Protoheme IX farnesyltransferase (299 aa).

Helical transmembrane passes span 25-45 (VVVL…RAGV), 47-67 (WTVL…AAAV), 95-115 (LAAL…LLTF), 119-139 (LAAW…TGFL), 147-167 (IVIG…AVSG), 173-193 (PLLL…ALAI), 218-238 (LHIL…YAIH), 243-263 (LYLL…WALY), and 279-299 (IRYL…PLTL).

It belongs to the UbiA prenyltransferase family. Protoheme IX farnesyltransferase subfamily.

It is found in the cell inner membrane. It carries out the reaction heme b + (2E,6E)-farnesyl diphosphate + H2O = Fe(II)-heme o + diphosphate. It participates in porphyrin-containing compound metabolism; heme O biosynthesis; heme O from protoheme: step 1/1. In terms of biological role, converts heme B (protoheme IX) to heme O by substitution of the vinyl group on carbon 2 of heme B porphyrin ring with a hydroxyethyl farnesyl side group. This chain is Protoheme IX farnesyltransferase, found in Azotobacter vinelandii (strain DJ / ATCC BAA-1303).